We begin with the raw amino-acid sequence, 113 residues long: Hydrogenase maturation factor HypA (113 aa).

Histidine 2 is a binding site for Ni(2+). Cysteine 73, cysteine 76, cysteine 89, and cysteine 92 together coordinate Zn(2+).

This sequence belongs to the HypA/HybF family.

Involved in the maturation of [NiFe] hydrogenases. Required for nickel insertion into the metal center of the hydrogenase. This Chlorobium phaeobacteroides (strain BS1) protein is Hydrogenase maturation factor HypA.